Consider the following 263-residue polypeptide: MNPNCARCGKIVYPTEKVNCLDKFWHKACFHCETCKMTLNMKNYKGYEKKPYCNAHYPKQSFTMVADTPENLRLKQQSELQSQVRYKEEFEKNKGKGFSVVADTPELQRIKKTQDQISNIKYHEEFEKSRMGPSGGEGIEPERREAQDSSSYRRPTEQQQPQPHHIPTSAPVYQQPQQQQVTPSYGGYKEPAAPVSIQRSAPGGGGKRYRAVYDYSAADEDEVSFQDGDTIVNVQQIDDGWMYGTVERTGDTGMLPANYVEAI.

The residue at position 1 (Met1) is an N-acetylmethionine. The LIM zinc-binding domain maps to Pro3–Thr63. At Lys42 the chain carries N6-acetyllysine. Nebulin repeat units follow at residues Met64–Gly95 and Gly97–Met131. Thr68 carries the post-translational modification Phosphothreonine. The residue at position 75 (Lys75) is an N6-methyllysine. Ser99 is subject to Phosphoserine. Phosphothreonine is present on Thr104. Lys112 is modified (N6-succinyllysine). Residues Ser118 and Ser134 each carry the phosphoserine modification. The interval Tyr122–Lys207 is disordered. Positions Asp148–Gln162 are enriched in polar residues. The 60-residue stretch at Gly204–Ile263 folds into the SH3 domain.

In terms of assembly, interacts with F-actin. Interacts with ANKRD54. Interacts with KBTBD10. Phosphorylated. Expressed in a wide range of tissues (but not the heart or skeletal muscle), the expression is specific for certain actin-rich cell types within these tissues. Expression is prominent in the cortical regions of ion-transporting duct cells in the pancreas, in the salivary parotid gland and in certain F-actin-rich cells in the distal tubule/collecting duct. In primary cultures of gastric fibroblasts, expression is mainly within the tips of lamellipodia and at the leading edges of membrane ruffles.

It is found in the cytoplasm. Its subcellular location is the cell cortex. The protein localises to the cytoskeleton. Plays an important role in the regulation of dynamic actin-based, cytoskeletal activities. Agonist-dependent changes in LASP1 phosphorylation may also serve to regulate actin-associated ion transport activities, not only in the parietal cell but also in certain other F-actin-rich secretory epithelial cell types. The sequence is that of LIM and SH3 domain protein 1 from Rattus norvegicus (Rat).